A 144-amino-acid polypeptide reads, in one-letter code: Deoxyuridine 5'-triphosphate nucleotidohydrolase (144 aa).

Substrate is bound by residues 63-65, Asn76, and 80-82; these read RSG and TID.

Belongs to the dUTPase family. It depends on Mg(2+) as a cofactor.

The catalysed reaction is dUTP + H2O = dUMP + diphosphate + H(+). Its pathway is pyrimidine metabolism; dUMP biosynthesis; dUMP from dCTP (dUTP route): step 2/2. This enzyme is involved in nucleotide metabolism: it produces dUMP, the immediate precursor of thymidine nucleotides and it decreases the intracellular concentration of dUTP so that uracil cannot be incorporated into DNA. The chain is Deoxyuridine 5'-triphosphate nucleotidohydrolase from Bacteroides fragilis (strain YCH46).